A 1034-amino-acid chain; its full sequence is Glycine dehydrogenase (decarboxylating), mitochondrial (1034 aa).

A mitochondrion-targeting transit peptide spans 1–63 (MERARRLAML…LNGFGSQVRT (63 aa)). At Lys770 the chain carries N6-(pyridoxal phosphate)lysine.

It belongs to the GcvP family. Homodimer. The glycine cleavage system is composed of four proteins: P, T, L and H. The cofactor is pyridoxal 5'-phosphate.

The protein localises to the mitochondrion. It carries out the reaction N(6)-[(R)-lipoyl]-L-lysyl-[glycine-cleavage complex H protein] + glycine + H(+) = N(6)-[(R)-S(8)-aminomethyldihydrolipoyl]-L-lysyl-[glycine-cleavage complex H protein] + CO2. Its function is as follows. The glycine cleavage system catalyzes the degradation of glycine. The P protein binds the alpha-amino group of glycine through its pyridoxal phosphate cofactor; CO(2) is released and the remaining methylamine moiety is then transferred to the lipoamide cofactor of the H protein. The chain is Glycine dehydrogenase (decarboxylating), mitochondrial (GDCSPA) from Flaveria trinervia (Clustered yellowtops).